The following is a 61-amino-acid chain: Small ribosomal subunit protein uS14 (61 aa).

4 residues coordinate Zn(2+): Cys-24, Cys-27, Cys-40, and Cys-43.

Belongs to the universal ribosomal protein uS14 family. Zinc-binding uS14 subfamily. As to quaternary structure, part of the 30S ribosomal subunit. Contacts proteins S3 and S10. It depends on Zn(2+) as a cofactor.

In terms of biological role, binds 16S rRNA, required for the assembly of 30S particles and may also be responsible for determining the conformation of the 16S rRNA at the A site. The sequence is that of Small ribosomal subunit protein uS14 from Malacoplasma penetrans (strain HF-2) (Mycoplasma penetrans).